A 773-amino-acid chain; its full sequence is Ethylene receptor 2 (773 aa).

The next 4 helical transmembrane spans lie at 4–24 (EIASWLLILSMVVFVSPVLAI), 53–73 (VSDFLIAVAYFSIPIELLYFV), 82–102 (WVLFEFIAFIVLCGMTHLLHG), and 122–142 (LTALVSCATAITLITLIPLLL). The Cu cation site is built by C94 and H98. Residues 187–331 (DRHTILYTTL…VVADQVTVAL (145 aa)) enclose the GAF domain. One can recognise a Histidine kinase domain in the interval 374–614 (TMSEGMRRPM…PETMSLLLRF (241 aa)). The Response regulatory domain occupies 647-766 (QVLLVDTNDS…AMESELRRVL (120 aa)). D702 carries the 4-aspartylphosphate modification. A Glycyl lysine isopeptide (Lys-Gly) (interchain with G-Cter in ubiquitin) cross-link involves residue K751.

The protein belongs to the ethylene receptor family. Heteromer with ETR1. Binds to MRF3/ECIP1. Cu cation serves as cofactor. Autophosphorylated predominantly on Ser residues. In terms of tissue distribution, expressed in seedlings, roots, leaves, flowers, mature siliques, shoot apical meristems, leaf primordia, inflorescence meristems, young floral meristems, developing petals, carpels and ovules. Low expression in stamens.

It is found in the endoplasmic reticulum membrane. Its function is as follows. Ethylene receptor related to bacterial two-component regulators. Acts as a redundant negative regulator of ethylene signaling. This Arabidopsis thaliana (Mouse-ear cress) protein is Ethylene receptor 2.